We begin with the raw amino-acid sequence, 189 residues long: Prostaglandin-H2 D-isomerase (189 aa).

The signal sequence occupies residues 1–24 (MATPSSLWLGLALLGTLGVLQTPA). Pyrrolidone carboxylic acid is present on Q25. N-linked (GlcNAc...) asparagine glycosylation occurs at N49. Residue C63 is the Nucleophile of the active site. Residue N76 is glycosylated (N-linked (GlcNAc...) asparagine). Residues C87 and C184 are joined by a disulfide bond.

This sequence belongs to the calycin superfamily. Lipocalin family. Monomer. In terms of tissue distribution, abundant in the brain and CNS, where it is expressed in tissues of the blood-brain barrier and secreted into the cerebro-spinal fluid.

It is found in the rough endoplasmic reticulum. The protein resides in the nucleus membrane. It localises to the golgi apparatus. The protein localises to the cytoplasm. Its subcellular location is the perinuclear region. It is found in the secreted. The catalysed reaction is prostaglandin H2 = prostaglandin D2. In terms of biological role, catalyzes the conversion of PGH2 to PGD2, a prostaglandin involved in smooth muscle contraction/relaxation and a potent inhibitor of platelet aggregation. Involved in a variety of CNS functions, such as sedation, NREM sleep and PGE2-induced allodynia, and may have an anti-apoptotic role in oligodendrocytes. Binds small non-substrate lipophilic molecules, including biliverdin, bilirubin, retinal, retinoic acid and thyroid hormone, and may act as a scavenger for harmful hydrophobic molecules and as a secretory retinoid and thyroid hormone transporter. Possibly involved in development and maintenance of the blood-brain, blood-retina, blood-aqueous humor and blood-testis barrier. It is likely to play important roles in both maturation and maintenance of the central nervous system and male reproductive system. Involved in PLA2G3-dependent maturation of mast cells. PLA2G3 is secreted by immature mast cells and acts on nearby fibroblasts upstream to PTDGS to synthesize PGD2, which in turn promotes mast cell maturation and degranulation via PTGDR. This is Prostaglandin-H2 D-isomerase (PTGDS) from Sus scrofa (Pig).